The primary structure comprises 1058 residues: Carbamoyl phosphate synthase large chain (1058 aa).

Residues 1–401 (MPKRKDIQKI…SLLKACRSLE (401 aa)) are carboxyphosphate synthetic domain. Residues arginine 129, arginine 169, glycine 175, glycine 176, arginine 208, isoleucine 210, glutamate 215, glycine 241, isoleucine 242, histidine 243, glutamine 284, and glutamate 298 each coordinate ATP. Residues 133 to 327 (KQLMQELDQP…IAKLAAKIAV (195 aa)) form the ATP-grasp 1 domain. Positions 284, 298, and 300 each coordinate Mg(2+). Mn(2+) is bound by residues glutamine 284, glutamate 298, and asparagine 300. An oligomerization domain region spans residues 402–546 (IGVCHNEMTS…YSTYELENES (145 aa)). The interval 547 to 929 (VQSNKESILV…ALYKAFEANN (383 aa)) is carbamoyl phosphate synthetic domain. The 191-residue stretch at 671-861 (EKALKELGIP…MAQIATKLIL (191 aa)) folds into the ATP-grasp 2 domain. 10 residues coordinate ATP: arginine 707, serine 746, isoleucine 748, glutamate 752, glycine 777, valine 778, histidine 779, serine 780, glutamine 820, and glutamate 832. Mg(2+) is bound by residues glutamine 820, glutamate 832, and asparagine 834. Positions 820, 832, and 834 each coordinate Mn(2+). Residues 930 to 1058 (SHLSEFGQIV…ESRCFNIEAI (129 aa)) enclose the MGS-like domain. The segment at 930–1058 (SHLSEFGQIV…ESRCFNIEAI (129 aa)) is allosteric domain.

Belongs to the CarB family. Composed of two chains; the small (or glutamine) chain promotes the hydrolysis of glutamine to ammonia, which is used by the large (or ammonia) chain to synthesize carbamoyl phosphate. Tetramer of heterodimers (alpha,beta)4. It depends on Mg(2+) as a cofactor. Mn(2+) is required as a cofactor.

The enzyme catalyses hydrogencarbonate + L-glutamine + 2 ATP + H2O = carbamoyl phosphate + L-glutamate + 2 ADP + phosphate + 2 H(+). The catalysed reaction is hydrogencarbonate + NH4(+) + 2 ATP = carbamoyl phosphate + 2 ADP + phosphate + 2 H(+). It participates in amino-acid biosynthesis; L-arginine biosynthesis; carbamoyl phosphate from bicarbonate: step 1/1. It functions in the pathway pyrimidine metabolism; UMP biosynthesis via de novo pathway; (S)-dihydroorotate from bicarbonate: step 1/3. Its function is as follows. Large subunit of the glutamine-dependent carbamoyl phosphate synthetase (CPSase). CPSase catalyzes the formation of carbamoyl phosphate from the ammonia moiety of glutamine, carbonate, and phosphate donated by ATP, constituting the first step of 2 biosynthetic pathways, one leading to arginine and/or urea and the other to pyrimidine nucleotides. The large subunit (synthetase) binds the substrates ammonia (free or transferred from glutamine from the small subunit), hydrogencarbonate and ATP and carries out an ATP-coupled ligase reaction, activating hydrogencarbonate by forming carboxy phosphate which reacts with ammonia to form carbamoyl phosphate. The chain is Carbamoyl phosphate synthase large chain from Streptococcus pyogenes serotype M18 (strain MGAS8232).